A 266-amino-acid chain; its full sequence is Shikimate dehydrogenase (NADP(+)) (266 aa).

Residues 16–18 (SKS) and Thr-65 each bind shikimate. Lys-69 acts as the Proton acceptor in catalysis. Shikimate contacts are provided by Asn-90 and Asp-105. Residues 128-132 (GAGGS) and Leu-211 contribute to the NADP(+) site. Shikimate is bound at residue Tyr-213. Gly-233 is an NADP(+) binding site.

It belongs to the shikimate dehydrogenase family. Homodimer.

The catalysed reaction is shikimate + NADP(+) = 3-dehydroshikimate + NADPH + H(+). It functions in the pathway metabolic intermediate biosynthesis; chorismate biosynthesis; chorismate from D-erythrose 4-phosphate and phosphoenolpyruvate: step 4/7. Its function is as follows. Involved in the biosynthesis of the chorismate, which leads to the biosynthesis of aromatic amino acids. Catalyzes the reversible NADPH linked reduction of 3-dehydroshikimate (DHSA) to yield shikimate (SA). This Helicobacter pylori (strain J99 / ATCC 700824) (Campylobacter pylori J99) protein is Shikimate dehydrogenase (NADP(+)).